Reading from the N-terminus, the 347-residue chain is Ribosomal RNA large subunit methyltransferase M (347 aa).

S-adenosyl-L-methionine contacts are provided by residues serine 184, 217 to 220, aspartate 236, aspartate 256, and aspartate 272; that span reads APGG. Lysine 301 (proton acceptor) is an active-site residue.

This sequence belongs to the class I-like SAM-binding methyltransferase superfamily. RNA methyltransferase RlmE family. RlmM subfamily. Monomer.

Its subcellular location is the cytoplasm. The enzyme catalyses cytidine(2498) in 23S rRNA + S-adenosyl-L-methionine = 2'-O-methylcytidine(2498) in 23S rRNA + S-adenosyl-L-homocysteine + H(+). Its function is as follows. Catalyzes the 2'-O-methylation at nucleotide C2498 in 23S rRNA. The sequence is that of Ribosomal RNA large subunit methyltransferase M from Xanthomonas axonopodis pv. citri (strain 306).